A 100-amino-acid chain; its full sequence is Internal protein II (100 aa).

Residues 1-10 (MKTYQEFIAE) constitute a propeptide that is removed on maturation.

Its function is as follows. Internal protein II, which has a histone-like character, binds weakly to other components of the assembly core during an early stage of bacteriophage head morphogenesis. The chain is Internal protein II (ipi2) from Enterobacteria phage T4 (Bacteriophage T4).